A 1126-amino-acid polypeptide reads, in one-letter code: [F-actin]-monooxygenase mical2 (1126 aa).

A monooxygenase domain region spans residues 2–494 (GENGDDKHGR…KHLFITNELQ (493 aa)). FAD-binding positions include C97, 116–118 (EKR), 123–125 (RNN), F183, Y299, and D399. The Calponin-homology (CH) domain maps to 516–619 (DVRPNKLLIW…MVLYLSKFYE (104 aa)). The short motif at 659–680 (RKRVPKDEKTSDDSDLNKRRKT) is the Nuclear localization signal element. 2 disordered regions span residues 748-830 (AVTA…SLSS) and 892-935 (PSLG…SGMS). Pro residues predominate over residues 792–803 (VRPPVQPRPGPA). A compositionally biased stretch (basic and acidic residues) spans 805–824 (PTRELRVVERAQSHPDDLGR). The span at 918-932 (SSSDSSPSSAPSRKS) shows a compositional bias: low complexity. The LIM zinc-binding domain occupies 1001–1063 (DTCYFCKRRV…QPHFMHSVTK (63 aa)). Residues C1003, C1006, H1024, C1027, C1030, C1033, C1053, and H1056 each contribute to the Zn(2+) site.

This sequence belongs to the Mical family. It depends on FAD as a cofactor.

The protein localises to the nucleus. The protein resides in the cytoplasm. The enzyme catalyses L-methionyl-[F-actin] + NADPH + O2 + H(+) = L-methionyl-(R)-S-oxide-[F-actin] + NADP(+) + H2O. In terms of biological role, nuclear monooxygenase that promotes depolymerization of F-actin by mediating oxidation of specific methionine residues on actin and regulates the srf signaling. Acts by modifying nuclear actin subunits through the addition of oxygen to form methionine-sulfoxide, leading to promote actin filament severing and prevent repolymerization. Acts as a key regulator of the srf signaling pathway elicited by nerve growth factor and serum: mediates oxidation and subsequent depolymerization of nuclear actin, leading to increase mkl1/mrtf-a presence in the nucleus and promote srf:mkl1/mrtf-a-dependent gene transcription. The chain is [F-actin]-monooxygenase mical2 from Xenopus tropicalis (Western clawed frog).